The chain runs to 427 residues: Serine--tRNA ligase (427 aa).

231 to 233 (TAE) is an L-serine binding site. Position 262–264 (262–264 (RSE)) interacts with ATP. Glu285 lines the L-serine pocket. 349-352 (EISS) provides a ligand contact to ATP. Ser385 lines the L-serine pocket.

The protein belongs to the class-II aminoacyl-tRNA synthetase family. Type-1 seryl-tRNA synthetase subfamily. In terms of assembly, homodimer. The tRNA molecule binds across the dimer.

It localises to the cytoplasm. The enzyme catalyses tRNA(Ser) + L-serine + ATP = L-seryl-tRNA(Ser) + AMP + diphosphate + H(+). It carries out the reaction tRNA(Sec) + L-serine + ATP = L-seryl-tRNA(Sec) + AMP + diphosphate + H(+). It participates in aminoacyl-tRNA biosynthesis; selenocysteinyl-tRNA(Sec) biosynthesis; L-seryl-tRNA(Sec) from L-serine and tRNA(Sec): step 1/1. Its function is as follows. Catalyzes the attachment of serine to tRNA(Ser). Is also able to aminoacylate tRNA(Sec) with serine, to form the misacylated tRNA L-seryl-tRNA(Sec), which will be further converted into selenocysteinyl-tRNA(Sec). The sequence is that of Serine--tRNA ligase from Sinorhizobium fredii (strain NBRC 101917 / NGR234).